Reading from the N-terminus, the 271-residue chain is Cell division protein FtsQ (271 aa).

Residues 1–37 are disordered; that stretch reads MAAGPTTAEKSGASGAKRSSKGSSDGPSRPGTRNRKF. The Cytoplasmic portion of the chain corresponds to 1-43; sequence MAAGPTTAEKSGASGAKRSSKGSSDGPSRPGTRNRKFRMPGTR. Over residues 8-24 the composition is skewed to low complexity; the sequence is AEKSGASGAKRSSKGSS. Residues 44 to 64 traverse the membrane as a helical segment; that stretch reads ALLITLGVLLLVAGGLWALYG. Over 65–271 the chain is Extracellular; the sequence is STWFRVERVK…APTAPASSGS (207 aa). Residues 68 to 137 enclose the POTRA domain; sequence FRVERVKTSG…HGIGLKVTER (70 aa).

It belongs to the FtsQ/DivIB family. FtsQ subfamily.

Its subcellular location is the cell membrane. Functionally, essential cell division protein. The protein is Cell division protein FtsQ of Streptomyces venezuelae (strain ATCC 10712 / CBS 650.69 / DSM 40230 / JCM 4526 / NBRC 13096 / PD 04745).